Here is a 41-residue protein sequence, read N- to C-terminus: Minor histocompatibility protein HB-1 (41 aa).

Residues 9-17 (EEKRGSLHV) form a loss of recognition by cytotoxic T lymphocyte (CTL) region.

As to quaternary structure, HB-1 forms a complex with MHC class I HLA-B44. In terms of tissue distribution, expressed in acute lymphoblastic leukemia B-cells and Epstein-Barr virus-transformed B-cells.

Precursor of the histocomplatibility antigen HB-1. More generally, minor histocomplatibility antigens (mHags) refer to immunogenic peptide which, when complexed with MHC, can generate an immune response after recognition by specific T-cells. The peptides are derived from polymorphic intracellular proteins, which are cleaved by normal pathways of antigen processing. The binding of these peptides to MHC class I or class II molecules and its expression on the cell surface can stimulate T-cell responses and thereby trigger graft rejection or graft-versus-host disease (GVHD) after hematopoietic stem cell transplantation from HLA-identical sibling donor. GVHD is a frequent complication after bone marrow transplantation (BMT), due to mismatch of minor histocomplatibility antigen in HLA-matched sibling marrow transplants. HB-1 is presented on the cell surface by MHC class I HLA-B44. This complex specifically elicits donor-cytotoxic T lymphocyte (CTL) reactivity in B-cell acute lymphoblastic leukemia (B-ALL) after treatment by HLA-identical allogenic bone marrow transplantation (BMT). It induces cell recognition and lysis by CTL. However, HB-1 restricted expression in B-ALL cells and not in normal tissues may allow a specific CTL reactivity against B-ALL without the risk of evoking graft-versus-host disease. The sequence is that of Minor histocompatibility protein HB-1 (HMHB1) from Homo sapiens (Human).